Here is a 617-residue protein sequence, read N- to C-terminus: Isopropyl malate synthase gloH (617 aa).

The 279-residue stretch at 47–325 (PIWLSTDLRD…ETGLDFSDLL (279 aa)) folds into the Pyruvate carboxyltransferase domain.

This sequence belongs to the alpha-IPM synthase/homocitrate synthase family. LeuA type 2 subfamily.

The catalysed reaction is 3-methyl-2-oxobutanoate + acetyl-CoA + H2O = (2S)-2-isopropylmalate + CoA + H(+). The protein operates within mycotoxin biosynthesis. Functionally, 2-isopropylmalate synthase; part of the gene cluster that mediates the biosynthesis of pneumocandins, lipohexapeptides of the echinocandin family that prevent fungal cell wall formation by non-competitive inhibition of beta-1,3-glucan synthase. The 10,12-dimethylmyristoyl side chain is synthesized by the reducing polyketide synthase gloL/GLPKS4. The thioesterase gloN/GLHYD exclusively interacts with gloL/GLPKS4 to maintain turnover of the polyketide side chain. The 10R,12S-dimethylmyristic acid is then transferred to the first thiolation domain of the nonribosomal peptide synthetase gloA/GLNRPS4 by the acyl-AMP ligase gloD/GLligase, followed by its acylation to L-ornithine to trigger elongation of the cyclic hexapeptide. L-ornithine, 4R-hydroxyl-L-proline (generated from L-proline by the dioxygenase gloF/GLOXY2), 3S-hydroxyl-L-homotyrosine (generated by gloG/GLHtyB, gloH/GLHtyA, gloI/GLHtyC, gloJ/GLHtyD and hydroxylated at C-3 by the dioxygenase gloM/GLOXY1), 3R-hydroxyl-L-glutamine (generated from L-glutamine probably by the dioxygenase gloE/GLOXY3) and 3S-hydroxyl-L-proline (generated from L-proline by the dioxygenase gloF/GLOXY2 to yield pneumocandin B0), or 3S-hydroxyl-4S-methyl-L-proline (generated from L-leucine by the dioxygenase gloC/GLOXY4 to yield pneumocandin A0) are sequentially added to the growing chain. The last C domain of gloA/GLNRPS4 is proposed to be responsible for cyclization by condensation to form the peptide bond between L-ornithine and 3S-hydroxyl-4S-methyl-L-proline (for pneumocandin A0) or 3S-hydroxyl-L-proline (for pneumocandin B0). Finally, the subsequent C-4 hydroxylation of 3S-hydroxyl-L-homotyrosine and L-ornithine dihydroxylation at C-4 and C-5 are performed by the cytochrome P450 monooxygenases gloP/GLP450-1 and gloO/GLP450-2, respectively. This chain is Isopropyl malate synthase gloH, found in Glarea lozoyensis (strain ATCC 20868 / MF5171).